We begin with the raw amino-acid sequence, 188 residues long: Biogenesis of lysosome-related organelles complex 1 subunit 5 (188 aa).

The disordered stretch occupies residues 1–24; that stretch reads MSSSSSSSSPVKSTGSPFIQSLKP. Positions 10-19 are enriched in polar residues; that stretch reads PVKSTGSPFI. Residues 101 to 183 are a coiled coil; it reads MQDQLASVLK…QYVTMDKELS (83 aa).

It belongs to the BLOC1S5 family. Component of the biogenesis of lysosome-related organelles complex 1 (BLOC-1).

In terms of biological role, component of the BLOC-1 complex, a complex that is required for normal biogenesis of lysosome-related organelles (LRO), such as platelet dense granules and melanosomes. Plays a role in intracellular vesicle trafficking. This chain is Biogenesis of lysosome-related organelles complex 1 subunit 5 (bloc1s5), found in Xenopus laevis (African clawed frog).